The following is a 390-amino-acid chain: 1-deoxy-D-xylulose 5-phosphate reductoisomerase (390 aa).

Residues Thr-10, Gly-11, Ser-12, Ile-13, Ala-36, Lys-37, Asn-38, and Asn-122 each contribute to the NADPH site. Lys-123 lines the 1-deoxy-D-xylulose 5-phosphate pocket. Glu-124 is a binding site for NADPH. Asp-148 contributes to the Mn(2+) binding site. 4 residues coordinate 1-deoxy-D-xylulose 5-phosphate: Ser-149, Glu-150, Ser-174, and His-197. Glu-150 contributes to the Mn(2+) binding site. Gly-203 contributes to the NADPH binding site. 4 residues coordinate 1-deoxy-D-xylulose 5-phosphate: Ser-210, Asn-215, Lys-216, and Glu-219. Glu-219 is a binding site for Mn(2+).

This sequence belongs to the DXR family. The cofactor is Mg(2+). Requires Mn(2+) as cofactor.

It catalyses the reaction 2-C-methyl-D-erythritol 4-phosphate + NADP(+) = 1-deoxy-D-xylulose 5-phosphate + NADPH + H(+). It functions in the pathway isoprenoid biosynthesis; isopentenyl diphosphate biosynthesis via DXP pathway; isopentenyl diphosphate from 1-deoxy-D-xylulose 5-phosphate: step 1/6. Catalyzes the NADPH-dependent rearrangement and reduction of 1-deoxy-D-xylulose-5-phosphate (DXP) to 2-C-methyl-D-erythritol 4-phosphate (MEP). This chain is 1-deoxy-D-xylulose 5-phosphate reductoisomerase, found in Trichlorobacter lovleyi (strain ATCC BAA-1151 / DSM 17278 / SZ) (Geobacter lovleyi).